Consider the following 202-residue polypeptide: Imidazoleglycerol-phosphate dehydratase (202 aa).

It belongs to the imidazoleglycerol-phosphate dehydratase family.

It localises to the cytoplasm. It carries out the reaction D-erythro-1-(imidazol-4-yl)glycerol 3-phosphate = 3-(imidazol-4-yl)-2-oxopropyl phosphate + H2O. It functions in the pathway amino-acid biosynthesis; L-histidine biosynthesis; L-histidine from 5-phospho-alpha-D-ribose 1-diphosphate: step 6/9. The polypeptide is Imidazoleglycerol-phosphate dehydratase (Lactococcus lactis subsp. cremoris (strain SK11)).